The sequence spans 530 residues: MSVSTNLKGLAELGLKPSEVFHNLSYEEIYQHELNNKEGVTSDNGTMMVDTGIFTGRSPKDKYFVDEPSSQNNIWWGPVNTKVSEAIFNELYAEVTKFLDNKKLYVFDGHAGTNDDTRISLRVVTERAWQHHFCTNMFLRPTKEELAKLDPEFTIINASGYKNPKYKEHGLNSEVFVIFHLAKKICIIGGTEYGGEMKKGIFSVMNYYLPLKNVLTMHCSANVGKDGDSALFFGLSGTGKTTLSTDPNRKLIGDDEHGWDDNGIFNIEGGCYAKTINLDPKTEPEIYAAIRRDALLENVVYDATTKKVDYSSAAKTENTRVSYPIFHIDNIQPGSKAGHPNTVIFLTYDAYGVLPAVSKLSIEQAMYHFLSGYTAKVAGTERGVKEPQATFSACFGQAFMTLHPTYYAKLLGEKMKKHQVNAYLINTGLVGGKYGVGKRMNLPATRQIINEILNGNIEKSEFEKHPVFQVSFPKSVNGVDAHILNPRNAWENKEDYDKTAADLAKQFVENYKKYLTGSKEFDYSQYGPIA.

Substrate is bound by residues Arg-57, Tyr-193, and Lys-199. ATP contacts are provided by residues Lys-199, His-218, and 234–242; that span reads GLSGTGKTT. Lys-199 and His-218 together coordinate Mn(2+). Mn(2+) is bound at residue Asp-255. 3 residues coordinate ATP: Glu-283, Arg-320, and Thr-445. Residue Arg-320 coordinates substrate.

This sequence belongs to the phosphoenolpyruvate carboxykinase (ATP) family. Requires Mn(2+) as cofactor.

It is found in the cytoplasm. It carries out the reaction oxaloacetate + ATP = phosphoenolpyruvate + ADP + CO2. Its pathway is carbohydrate biosynthesis; gluconeogenesis. In terms of biological role, involved in the gluconeogenesis. Catalyzes the conversion of oxaloacetate (OAA) to phosphoenolpyruvate (PEP) through direct phosphoryl transfer between the nucleoside triphosphate and OAA. This is Phosphoenolpyruvate carboxykinase (ATP) from Leptospira biflexa serovar Patoc (strain Patoc 1 / Ames).